Reading from the N-terminus, the 180-residue chain is Large ribosomal subunit protein uL5 (180 aa).

The protein belongs to the universal ribosomal protein uL5 family. In terms of assembly, part of the 50S ribosomal subunit; part of the 5S rRNA/L5/L18/L25 subcomplex. Contacts the 5S rRNA and the P site tRNA. Forms a bridge to the 30S subunit in the 70S ribosome.

This is one of the proteins that bind and probably mediate the attachment of the 5S RNA into the large ribosomal subunit, where it forms part of the central protuberance. In the 70S ribosome it contacts protein S13 of the 30S subunit (bridge B1b), connecting the 2 subunits; this bridge is implicated in subunit movement. Contacts the P site tRNA; the 5S rRNA and some of its associated proteins might help stabilize positioning of ribosome-bound tRNAs. In Acholeplasma laidlawii (strain PG-8A), this protein is Large ribosomal subunit protein uL5.